We begin with the raw amino-acid sequence, 846 residues long: Translation initiation factor IF-2 (846 aa).

A disordered region spans residues 198–219; sequence YKREEEEKKSKAKKAGGKGFKK. Residues 207 to 219 are compositionally biased toward basic residues; that stretch reads SKAKKAGGKGFKK. A tr-type G domain is found at 345 to 512; sequence SRAPVVTIMG…AVLLQSEVLE (168 aa). The segment at 354-361 is G1; it reads GHVDHGKT. Residue 354 to 361 participates in GTP binding; it reads GHVDHGKT. The tract at residues 379-383 is G2; sequence GITQH. A G3 region spans residues 400–403; sequence DTPG. GTP contacts are provided by residues 400–404 and 454–457; these read DTPGH and NKID. Residues 454-457 form a G4 region; sequence NKID. Positions 490–492 are G5; sequence SAK.

It belongs to the TRAFAC class translation factor GTPase superfamily. Classic translation factor GTPase family. IF-2 subfamily.

Its subcellular location is the cytoplasm. One of the essential components for the initiation of protein synthesis. Protects formylmethionyl-tRNA from spontaneous hydrolysis and promotes its binding to the 30S ribosomal subunits. Also involved in the hydrolysis of GTP during the formation of the 70S ribosomal complex. The chain is Translation initiation factor IF-2 from Francisella tularensis subsp. tularensis (strain SCHU S4 / Schu 4).